We begin with the raw amino-acid sequence, 104 residues long: Pyrimidine/purine nucleoside phosphorylase (104 aa).

It belongs to the nucleoside phosphorylase PpnP family.

The catalysed reaction is a purine D-ribonucleoside + phosphate = a purine nucleobase + alpha-D-ribose 1-phosphate. The enzyme catalyses adenosine + phosphate = alpha-D-ribose 1-phosphate + adenine. It carries out the reaction cytidine + phosphate = cytosine + alpha-D-ribose 1-phosphate. It catalyses the reaction guanosine + phosphate = alpha-D-ribose 1-phosphate + guanine. The catalysed reaction is inosine + phosphate = alpha-D-ribose 1-phosphate + hypoxanthine. The enzyme catalyses thymidine + phosphate = 2-deoxy-alpha-D-ribose 1-phosphate + thymine. It carries out the reaction uridine + phosphate = alpha-D-ribose 1-phosphate + uracil. It catalyses the reaction xanthosine + phosphate = alpha-D-ribose 1-phosphate + xanthine. Its function is as follows. Catalyzes the phosphorolysis of diverse nucleosides, yielding D-ribose 1-phosphate and the respective free bases. Can use uridine, adenosine, guanosine, cytidine, thymidine, inosine and xanthosine as substrates. Also catalyzes the reverse reactions. This chain is Pyrimidine/purine nucleoside phosphorylase, found in Syntrophotalea carbinolica (strain DSM 2380 / NBRC 103641 / GraBd1) (Pelobacter carbinolicus).